Reading from the N-terminus, the 158-residue chain is Transcription elongation factor GreA (158 aa).

Residues 3 to 75 (TEKTYPMTQE…TQLENMIRNA (73 aa)) are a coiled coil.

Belongs to the GreA/GreB family.

Its function is as follows. Necessary for efficient RNA polymerase transcription elongation past template-encoded arresting sites. The arresting sites in DNA have the property of trapping a certain fraction of elongating RNA polymerases that pass through, resulting in locked ternary complexes. Cleavage of the nascent transcript by cleavage factors such as GreA or GreB allows the resumption of elongation from the new 3'terminus. GreA releases sequences of 2 to 3 nucleotides. The sequence is that of Transcription elongation factor GreA from Bacillus cytotoxicus (strain DSM 22905 / CIP 110041 / 391-98 / NVH 391-98).